Reading from the N-terminus, the 337-residue chain is G-protein coupled receptor 26 (337 aa).

The Extracellular portion of the chain corresponds to Met1 to Gly10. Residues Leu11–Leu31 traverse the membrane as a helical segment. Residues His32–Asn47 are Cytoplasmic-facing. The helical transmembrane segment at Leu48–Val68 threads the bilayer. The Extracellular portion of the chain corresponds to Ala69–Leu81. The cysteines at positions 79 and 156 are disulfide-linked. A helical membrane pass occupies residues Ala82–Ile102. Topologically, residues Asp103–Ala123 are cytoplasmic. A helical membrane pass occupies residues Ala124–Leu144. Residues Ser145 to Arg168 are Extracellular-facing. Residues Phe169–Cys189 traverse the membrane as a helical segment. Over Cys190–Thr245 the chain is Cytoplasmic. Residues Phe246 to Phe266 traverse the membrane as a helical segment. The Extracellular segment spans residues Ser267–Gly276. Residues Val277–Leu297 traverse the membrane as a helical segment. Topologically, residues Arg298–Glu337 are cytoplasmic.

The protein belongs to the G-protein coupled receptor 1 family. Highly expressed in the CNS, the highest expression is seen in the amygdala, hippocampus and thalamus. Weak expression is detected in testis. Down-regulated in glioblastoma.

It localises to the cell membrane. Its function is as follows. Orphan receptor. Displays a significant level of constitutive activity. Its effect is mediated by G(s)-alpha protein that stimulate adenylate cyclase, resulting in an elevation of intracellular cAMP. The chain is G-protein coupled receptor 26 (GPR26) from Homo sapiens (Human).